The following is a 324-amino-acid chain: HTH-type transcriptional regulator CysB (324 aa).

One can recognise an HTH lysR-type domain in the interval 1-59 (MKLQQLRYIVEVVNHNLNVSSTAEGLYTSQPGISKQVRMLEDELGIQIFARSGKHLTQV). The H-T-H motif DNA-binding region spans 19 to 38 (VSSTAEGLYTSQPGISKQVR).

It belongs to the LysR transcriptional regulatory family. As to quaternary structure, homotetramer.

It localises to the cytoplasm. This protein is a positive regulator of gene expression for the cysteine regulon, a system of 10 or more loci involved in the biosynthesis of L-cysteine from inorganic sulfate. The inducer for CysB is N-acetylserine. CysB inhibits its own transcription. The sequence is that of HTH-type transcriptional regulator CysB (cysB) from Salmonella typhimurium (strain LT2 / SGSC1412 / ATCC 700720).